The sequence spans 87 residues: Omega-lycotoxin-Am1a (87 aa).

The N-terminal stretch at 1–17 (MKLSIFFVLFFIAIAYC) is a signal peptide. The propeptide occupies 18 to 40 (QPEFLDDEEDEVEETLPVAEEGR). Cystine bridges form between Cys44-Cys59, Cys51-Cys64, Cys58-Cys84, and Cys66-Cys82.

It belongs to the neurotoxin omega-lctx family. In terms of tissue distribution, expressed by the venom gland.

The protein localises to the secreted. Functionally, modulates Cav2.1/CACNA1A voltage-gated calcium channels (P/Q-type currents) in rat cerebellar Purkinje cells and hippocampal CA1-CA3 neurons. At saturating concentrations (&gt;10 nM) decelerates activation kinetics and slightly increases peak amplitude without affecting deactivation kinetics. In vivo, does not cause death when intravenously injected into mice. In rat models, through its activity on Cav2.1/CACNA1A, has an ameliorative effect on memory defects provoked by hyperstimulation of N-methyl-D-aspartate receptors (NMDARs) in the hippocampus. The chain is Omega-lycotoxin-Am1a from Alopecosa marikovskyi (Wolf spider).